Here is a 66-residue protein sequence, read N- to C-terminus: Toxin Boma6c (66 aa).

In terms of domain architecture, LCN-type CS-alpha/beta spans 2 to 64 (RDAYIAQNYN…VPIRIPGKCH (63 aa)). Disulfide bonds link C12-C63, C16-C36, C22-C46, and C26-C48.

The protein belongs to the long (4 C-C) scorpion toxin superfamily. Sodium channel inhibitor family. Alpha subfamily. In terms of tissue distribution, expressed by the venom gland.

It localises to the secreted. Its function is as follows. Alpha toxins bind voltage-independently at site-3 of sodium channels (Nav) and inhibit the inactivation of the activated channels, thereby blocking neuronal transmission. In Buthus occitanus mardochei (Moroccan scorpion), this protein is Toxin Boma6c.